The chain runs to 416 residues: Adipocyte plasma membrane-associated protein (416 aa).

The tract at residues 1 to 32 (MSEADGLRQRRPLRPQVVTDDDGQAPEAKDGS) is disordered. Residue Ser2 is modified to N-acetylserine. At 2–40 (SEADGLRQRRPLRPQVVTDDDGQAPEAKDGSSFSGRVFR) the chain is on the cytoplasmic side. Thr19 bears the Phosphothreonine mark. A helical; Signal-anchor for type II membrane protein membrane pass occupies residues 41 to 61 (VTFLMLAVSLTVPLLGAMMLL). The Extracellular segment spans residues 62–416 (ESPIDPQPLS…FLCRLSLQAV (355 aa)). N-linked (GlcNAc...) asparagine glycosylation is found at Asn160 and Asn196.

This sequence belongs to the strictosidine synthase family. In terms of tissue distribution, liver, glomerular and tubular structures of the kidney, endothelial cells, arterial wall and pancreatic islets of Langerhans (at protein level). Found ubiquitously in adult as well as in embryonic tissues. In adult tissue, the highest expression is found in the liver, placenta and heart. Found on the cell surface of monocytes. In embryonic tissue, the highest expression levels is found in the liver and the kidney.

The protein localises to the membrane. Exhibits strong arylesterase activity with beta-naphthyl acetate and phenyl acetate. May play a role in adipocyte differentiation. The polypeptide is Adipocyte plasma membrane-associated protein (APMAP) (Homo sapiens (Human)).